A 316-amino-acid chain; its full sequence is tRNA dimethylallyltransferase (316 aa).

Residue 17 to 24 (GPTASGKT) participates in ATP binding. 19-24 (TASGKT) serves as a coordination point for substrate. 3 interaction with substrate tRNA regions span residues 42–45 (DSAL), 166–170 (QRLSR), and 247–252 (RCVGYR).

Belongs to the IPP transferase family. In terms of assembly, monomer. Mg(2+) is required as a cofactor.

It catalyses the reaction adenosine(37) in tRNA + dimethylallyl diphosphate = N(6)-dimethylallyladenosine(37) in tRNA + diphosphate. Its function is as follows. Catalyzes the transfer of a dimethylallyl group onto the adenine at position 37 in tRNAs that read codons beginning with uridine, leading to the formation of N6-(dimethylallyl)adenosine (i(6)A). The sequence is that of tRNA dimethylallyltransferase from Erwinia tasmaniensis (strain DSM 17950 / CFBP 7177 / CIP 109463 / NCPPB 4357 / Et1/99).